The primary structure comprises 744 residues: Zinc finger protein 366 (744 aa).

Residues 206-228 (KQPPEPLLPRKAEPQESEETKQK) are disordered. Positions 213–228 (LPRKAEPQESEETKQK) are enriched in basic and acidic residues. C2H2-type zinc fingers lie at residues 253-275 (WQCPTCEKSYTSKYNLVTHILGH), 281-303 (HACTHCGKLFKQLSHLHTHMLTH), 309-331 (HKCQVCHKAFTQTSHLKRHMMQH), 337-359 (HNCRVCGRGFAYPSELKAHEAKH), 365-387 (NICVECGLDFPTLAQLKRHLTTH), 393-415 (YNCSECDKTFQYPSQLQNHMMKH), 421-443 (YICSECGMEFVQPHHLKQHSLTH), 449-471 (HKCGICGREFTLLANMKRHVLIH), 477-499 (YQCHLCYKSFVQKQTLKAHMIVH), 505-527 (FKCKLCGKEFNRMHNLMGHMHLH), and 533-556 (FKCLYCPSKFTLKGNLTRHMKVKH). The tract at residues 455-744 (GREFTLLANM…MEKQAVLLGI (290 aa)) is interaction with NRIP1. The PXDLS motif lies at 590–594 (PFDLS). Disordered stretches follow at residues 603-627 (VFQSDGESAQGSHCHEEEEEDNCYE) and 664-692 (KEEKEDASKGEWEKRSKGDLGAEGGQERD).

In terms of assembly, interacts with ESR1 and NRIP1. Interacts (via PXDLS motif) with CTBP1. As to expression, expressed in immature and mature dendritic cells (DCs). Not detected in other blood cell types.

It is found in the nucleus. Has transcriptional repression activity. Acts as a corepressor of ESR1; the function seems to involve CTBP1 and histone deacetylases. This chain is Zinc finger protein 366, found in Homo sapiens (Human).